The primary structure comprises 333 residues: MASTIKEVFAEIAAPVENSHGKVTVVGVGQVGMACAYSILQQNLANELCLVDVVADKLKGEMMDLQHGLAFTRHCTVKADTDYSITAGSKLCVVTAGARQREGETRLSLVQRNVEIFKGIIPQLVKYSPDTCILVVSNPVDVLTYVTWKLSGLPRERVFGSGTNLDSARFRFLLSEKLNIAPSSCHGWIIGEHGDSSVAVWSGVNVAGVTLHEIKPDIGEKTDNEHWEAEIHKKVVDSAYEIIKLKGYTSWAIGLSVAKIAQGIFSNSRNVFALSTNVKGFHGINDDVYLSLPVVLGSAGLTHVVKQQLTEAEVQKLHNSAKALLEVQNGIVM.

Residues 29-57 (GQVGMACAYSILQQNLANELCLVDVVADK) and arginine 99 each bind NAD(+). The substrate site is built by arginine 106, asparagine 138, and arginine 169. Asparagine 138 is an NAD(+) binding site. Histidine 193 acts as the Proton acceptor in catalysis. Threonine 249 is a binding site for substrate.

The protein belongs to the LDH/MDH superfamily. LDH family. As to quaternary structure, homotetramer.

Its subcellular location is the cytoplasm. The catalysed reaction is (S)-lactate + NAD(+) = pyruvate + NADH + H(+). The protein operates within fermentation; pyruvate fermentation to lactate; (S)-lactate from pyruvate: step 1/1. The chain is L-lactate dehydrogenase (ldh-1) from Caenorhabditis elegans.